A 590-amino-acid polypeptide reads, in one-letter code: Glutamine--fructose-6-phosphate aminotransferase [isomerizing] (590 aa).

The active-site Nucleophile; for GATase activity is Cys-2. The Glutamine amidotransferase type-2 domain maps to Cys-2–Asp-219. SIS domains follow at residues Val-277–Met-415 and Leu-438–Pro-580. Residue Lys-585 is the For Fru-6P isomerization activity of the active site.

In terms of assembly, homodimer.

It localises to the cytoplasm. The enzyme catalyses D-fructose 6-phosphate + L-glutamine = D-glucosamine 6-phosphate + L-glutamate. Functionally, catalyzes the first step in hexosamine metabolism, converting fructose-6P into glucosamine-6P using glutamine as a nitrogen source. The polypeptide is Glutamine--fructose-6-phosphate aminotransferase [isomerizing] (Methanothermobacter thermautotrophicus (strain ATCC 29096 / DSM 1053 / JCM 10044 / NBRC 100330 / Delta H) (Methanobacterium thermoautotrophicum)).